We begin with the raw amino-acid sequence, 388 residues long: Protein RMD5 homolog (388 aa).

A LisH domain is found at 112-144 (DTHIVNQIIANFFYRQGMFDIGDCFVAETGESE). The 58-residue stretch at 150–207 (SFVEMYRILEAMKRRDLEPALNWAVSNSDKLKEARSDLEMKLHSLHFLEIARGKNSKE) folds into the CTLH domain. Residues 330-374 (CPVSKEQSSDDNPPMMMSCGHVLCKQTINKMSKNGSKSSFKCPYC) form an RING-Gid-type zinc finger.

Interacts with RANBPM.

It is found in the cytoplasm. The chain is Protein RMD5 homolog from Arabidopsis thaliana (Mouse-ear cress).